The primary structure comprises 313 residues: uncharacterized protein (313 aa).

Alanine 29 to aspartate 61 contributes to the NADP(+) binding site.

The protein belongs to the short-chain dehydrogenases/reductases (SDR) family. 2,4-dienoyl-CoA reductase subfamily.

This is an uncharacterized protein from Caenorhabditis elegans.